We begin with the raw amino-acid sequence, 548 residues long: Membrane protein insertase YidC (548 aa).

The helical transmembrane segment at asparagine 6 to aspartate 26 threads the bilayer. Residues asparagine 28–alanine 54 form a disordered region. Residues proline 29 to threonine 42 are compositionally biased toward low complexity. A run of 4 helical transmembrane segments spans residues phenylalanine 350–tyrosine 370, phenylalanine 424–isoleucine 444, leucine 458–isoleucine 478, and proline 499–valine 519.

This sequence belongs to the OXA1/ALB3/YidC family. Type 1 subfamily. In terms of assembly, interacts with the Sec translocase complex via SecD. Specifically interacts with transmembrane segments of nascent integral membrane proteins during membrane integration.

It localises to the cell inner membrane. Functionally, required for the insertion and/or proper folding and/or complex formation of integral membrane proteins into the membrane. Involved in integration of membrane proteins that insert both dependently and independently of the Sec translocase complex, as well as at least some lipoproteins. Aids folding of multispanning membrane proteins. This is Membrane protein insertase YidC from Salmonella arizonae (strain ATCC BAA-731 / CDC346-86 / RSK2980).